Here is a 364-residue protein sequence, read N- to C-terminus: Fructose-bisphosphate aldolase A (364 aa).

At Tyr5 the chain carries Phosphotyrosine. The residue at position 9 (Thr9) is a Phosphothreonine. Ser36 and Ser39 each carry phosphoserine. Position 42 is an N6-acetyllysine; alternate (Lys42). Lys42 is covalently cross-linked (Glycyl lysine isopeptide (Lys-Gly) (interchain with G-Cter in SUMO1); alternate). Residue Lys42 forms a Glycyl lysine isopeptide (Lys-Gly) (interchain with G-Cter in SUMO2); alternate linkage. Arg43 serves as a coordination point for beta-D-fructose 1,6-bisphosphate. Position 46 is a phosphoserine (Ser46). N6-(2-hydroxyisobutyryl)lysine is present on Lys99. The residue at position 108 (Lys108) is an N6-acetyllysine. Lys111 carries the post-translational modification N6-acetyllysine; alternate. Lys111 is subject to N6-malonyllysine; alternate. Phosphoserine is present on Ser132. The residue at position 147 (Lys147) is an N6-(2-hydroxyisobutyryl)lysine. Residue Glu188 is the Proton acceptor of the active site. Lys230 serves as the catalytic Schiff-base intermediate with dihydroxyacetone-P. A Phosphoserine modification is found at Ser272. Beta-D-fructose 1,6-bisphosphate-binding positions include 272–274, Ser301, and Arg304; that span reads SGG. The residue at position 312 (Lys312) is an N6-malonyllysine. N6-acetyllysine is present on Lys330.

This sequence belongs to the class I fructose-bisphosphate aldolase family. As to quaternary structure, homotetramer. Interacts with SNX9 and WAS. Interacts with FBP2; the interaction blocks FBP2 inhibition by physiological concentrations of AMP and reduces inhibition by Ca(2+).

The protein localises to the cytoplasm. The protein resides in the myofibril. Its subcellular location is the sarcomere. It is found in the i band. It localises to the m line. The catalysed reaction is beta-D-fructose 1,6-bisphosphate = D-glyceraldehyde 3-phosphate + dihydroxyacetone phosphate. Its pathway is carbohydrate degradation; glycolysis; D-glyceraldehyde 3-phosphate and glycerone phosphate from D-glucose: step 4/4. Catalyzes the reversible conversion of beta-D-fructose 1,6-bisphosphate (FBP) into two triose phosphate and plays a key role in glycolysis and gluconeogenesis. In addition, may also function as scaffolding protein. The protein is Fructose-bisphosphate aldolase A (Aldoa) of Mus musculus (Mouse).